The following is a 144-amino-acid chain: Bacilliredoxin BrxA (144 aa).

Residues C53 and C55 each act as nucleophile in the active site. Residue C53 is modified to S-bacillithiol cysteine disulfide. A CXC active site motif motif is present at residues 53–55; that stretch reads CGC. A disulfide bridge links C53 with C55.

It belongs to the bacilliredoxin family. N-terminal Cys of the CXC active site motif can react with bacillithiol (BSH) to form mixed disulfides. S-bacillithiolation protects Cys residues against overoxidation by acting as a redox switch in response to oxidative stress.

Functionally, S-bacillithiolation is the formation of mixed disulfide bonds between protein thiols and the general thiol reductant bacillithiol (BSH) under oxidative stress. BSH is an equivalent of glutathione (GSH) in Firmicutes. This protein is a dithiol bacilliredoxin, which debacillithiolates (removes BSH) the S-bacillithiolated OhrR (OhrR-SSB) in vitro and in vivo NaOCl-generated S-bacillithiolated MetE (MetE-SSB). Involved in maintaining redox homeostasis in response to disulfide stress conditions. Has a redox potential of -130 mV. Displays weak protein disulfide isomerase activity in vitro. The polypeptide is Bacilliredoxin BrxA (Bacillus subtilis (strain 168)).